Here is a 433-residue protein sequence, read N- to C-terminus: MKALTEIFGKLLEKIRGVDYIDEATLQELSREIQRTLLKADVPLDLVKSFTENAVKRIKEEKPPAGIPPREYLIYVLYEELVKLLGGEQPAEFKPTKKPYIVLLLGVEGSGKTTTAAKLAKYLAKRGYKVGLVETDTIRPAAFDQLRQLAEKIGVPFYGERDGKDAVEIAKRGVQNFKNMDVIIVDTAGRHRNEEALLKEVRAIYDAVSPDEVVLVIDATVGKMAAAQAEAFMKYLPIHSVIITKMDSTARGGGALAAVAKTGAKVKFIGVGEDVDEFEQFSPRKFVARVLGMGDLDTLLEKIKAVFEEEEVLEEIESGRLDLLTFKKQIDSLLKLGPLSKVFQLLPGNLAAKISEEQIELSQRNLKKWRAILSSMTLEELKNPEILNASRIRRIALGAGVAPKDVKEMLTVYENLRKMSKTLRRQLRLRMAK.

GTP-binding positions include 106-113 (GVEGSGKT), 186-190 (DTAGR), and 244-247 (TKMD).

It belongs to the GTP-binding SRP family. SRP54 subfamily. In terms of assembly, part of the signal recognition particle protein translocation system, which is composed of SRP and FtsY. Archaeal SRP consists of a 7S RNA molecule of 300 nucleotides and two protein subunits: SRP54 and SRP19.

The protein localises to the cytoplasm. It catalyses the reaction GTP + H2O = GDP + phosphate + H(+). Functionally, involved in targeting and insertion of nascent membrane proteins into the cytoplasmic membrane. Binds to the hydrophobic signal sequence of the ribosome-nascent chain (RNC) as it emerges from the ribosomes. The SRP-RNC complex is then targeted to the cytoplasmic membrane where it interacts with the SRP receptor FtsY. In Pyrobaculum aerophilum (strain ATCC 51768 / DSM 7523 / JCM 9630 / CIP 104966 / NBRC 100827 / IM2), this protein is Signal recognition particle 54 kDa protein.